The following is a 181-amino-acid chain: MGIMCSGDVSERMNKTIELLKEQFLSIHSGRVNSGQFEKVMVDCEGASVPLVSLASIRVLNANTIVVTPYDSALLSQIDRALRNVPNIGTPGNDGECIKIVMPQLTEARRHEYVKQARVKAEEARVSARNIRRKARASLDAMGLAKDEIVRREKELDKLTKDVISVVDDLLRHKESELLRL.

Belongs to the RRF family.

It localises to the cytoplasm. Functionally, responsible for the release of ribosomes from messenger RNA at the termination of protein biosynthesis. May increase the efficiency of translation by recycling ribosomes from one round of translation to another. The sequence is that of Ribosome-recycling factor from Tropheryma whipplei (strain TW08/27) (Whipple's bacillus).